The chain runs to 286 residues: Ribosome-inactivating protein momordin I (286 aa).

The signal sequence occupies residues 1–23 (MSRFSVLSFLILAIFLGGSIVKG). Glutamate 183 is an active-site residue. An N-linked (GlcNAc...) asparagine glycan is attached at asparagine 250. A propeptide spans 270 to 286 (AEGDNGDVSTTHGFSSY) (removed in mature form).

It belongs to the ribosome-inactivating protein family. Type 1 RIP subfamily.

It catalyses the reaction Endohydrolysis of the N-glycosidic bond at one specific adenosine on the 28S rRNA.. This Momordica charantia (Bitter gourd) protein is Ribosome-inactivating protein momordin I.